A 132-amino-acid polypeptide reads, in one-letter code: Protein NrdI (132 aa).

This sequence belongs to the NrdI family.

In terms of biological role, probably involved in ribonucleotide reductase function. In Bartonella quintana (strain Toulouse) (Rochalimaea quintana), this protein is Protein NrdI.